A 165-amino-acid polypeptide reads, in one-letter code: Phosphopantetheine adenylyltransferase (165 aa).

Threonine 10 is a binding site for substrate. Residues 10-11 and histidine 18 contribute to the ATP site; that span reads TF. Positions 42, 75, and 89 each coordinate substrate. Residues 90–92, glutamate 100, and 125–131 contribute to the ATP site; these read GVR and VSFISSS.

Belongs to the bacterial CoaD family. As to quaternary structure, homohexamer. Mg(2+) serves as cofactor.

It localises to the cytoplasm. The enzyme catalyses (R)-4'-phosphopantetheine + ATP + H(+) = 3'-dephospho-CoA + diphosphate. The protein operates within cofactor biosynthesis; coenzyme A biosynthesis; CoA from (R)-pantothenate: step 4/5. Reversibly transfers an adenylyl group from ATP to 4'-phosphopantetheine, yielding dephospho-CoA (dPCoA) and pyrophosphate. In Buchnera aphidicola subsp. Acyrthosiphon pisum (strain 5A), this protein is Phosphopantetheine adenylyltransferase.